A 280-amino-acid chain; its full sequence is TGLKPFACKECGKSFSNKAYFESHKLMHAGIKPFECTECGKQFLLKQLLKSHQLIHTEETPFVCPECGQGYKSKQGLQNHLLCHTGETNFTCKECGKKFLLQKHLNRHKLTHSSEKPFICSECGKRFSRKDGLGMHQLIHTGEKPYVCTECGTSFRVRPQLRIHLRTHTRETPFKCEDCGRVFATGTKLQVHKVTHTGEKPFTCEKCGKSFTQKTNLNTHQLTHTGGKNFKCEECGKCFSRKDYLRVHQRFHTGEKPYKCNECEESFCRKDLLQTHELSH.

C2H2-type zinc fingers lie at residues 6–28, 34–56, 62–84, 90–112, 118–140, 146–168, 174–196, 202–224, 230–252, and 258–280; these read FACK…KLMH, FECT…QLIH, FVCP…LLCH, FTCK…KLTH, FICS…QLIH, YVCT…LRTH, FKCE…KVTH, FTCE…QLTH, FKCE…QRFH, and YKCN…ELSH.

Belongs to the krueppel C2H2-type zinc-finger protein family.

It is found in the nucleus. Its function is as follows. May be involved in transcriptional regulation. The polypeptide is Gastrula zinc finger protein XlCGF46.1 (Xenopus laevis (African clawed frog)).